Reading from the N-terminus, the 288-residue chain is Inositol monophosphatase 2 (288 aa).

The Mg(2+) site is built by glutamate 81, aspartate 101, isoleucine 103, and aspartate 104. Residue glutamate 81 coordinates substrate. Substrate-binding positions include 103 to 106 (IDGT), 205 to 207 (GSS), glutamine 224, and aspartate 231. Mg(2+) is bound at residue aspartate 231.

This sequence belongs to the inositol monophosphatase superfamily. As to quaternary structure, homodimer. The cofactor is Mg(2+).

The protein resides in the cytoplasm. The enzyme catalyses a myo-inositol phosphate + H2O = myo-inositol + phosphate. The catalysed reaction is 1D-myo-inositol 1-phosphate + H2O = myo-inositol + phosphate. It catalyses the reaction 1D-myo-inositol 2-phosphate + H2O = myo-inositol + phosphate. It carries out the reaction 1D-myo-inositol 3-phosphate + H2O = myo-inositol + phosphate. The enzyme catalyses 1D-myo-inositol 4-phosphate + H2O = myo-inositol + phosphate. The catalysed reaction is 1D-myo-inositol 5-phosphate + H2O = myo-inositol + phosphate. It catalyses the reaction 1D-myo-inositol 6-phosphate + H2O = myo-inositol + phosphate. It carries out the reaction alpha-D-glucose 1-phosphate + H2O = D-glucose + phosphate. The enzyme catalyses glycerol 2-phosphate + H2O = glycerol + phosphate. The catalysed reaction is adenosine 2'-phosphate + H2O = adenosine + phosphate. The protein operates within polyol metabolism; myo-inositol biosynthesis; myo-inositol from D-glucose 6-phosphate: step 2/2. Its activity is regulated as follows. Inhibited by high Li(+) and restricted Mg(2+) concentrations. Phosphatase that can use myo-inositol monophosphates, myo-inositol 1,4-diphosphate, scyllo-inositol-1,4-diphosphate, glucose-1-phosphate, beta-glycerophosphate and 2'-AMP as substrates in vitro. It is likely that IMPA2 has an as yet unidentified in vivo substrate(s). Has been implicated as the pharmacological target for lithium (Li(+)) action in brain. The sequence is that of Inositol monophosphatase 2 from Homo sapiens (Human).